The primary structure comprises 600 residues: Dihydroxy-acid dehydratase (600 aa).

Aspartate 82 provides a ligand contact to Mg(2+). [2Fe-2S] cluster is bound at residue cysteine 123. Residues aspartate 124 and lysine 125 each coordinate Mg(2+). Lysine 125 bears the N6-carboxylysine mark. Cysteine 192 provides a ligand contact to [2Fe-2S] cluster. Mg(2+) is bound at residue glutamate 489. Serine 515 (proton acceptor) is an active-site residue.

The protein belongs to the IlvD/Edd family. In terms of assembly, homodimer. Requires [2Fe-2S] cluster as cofactor. It depends on Mg(2+) as a cofactor.

The enzyme catalyses (2R)-2,3-dihydroxy-3-methylbutanoate = 3-methyl-2-oxobutanoate + H2O. It catalyses the reaction (2R,3R)-2,3-dihydroxy-3-methylpentanoate = (S)-3-methyl-2-oxopentanoate + H2O. Its pathway is amino-acid biosynthesis; L-isoleucine biosynthesis; L-isoleucine from 2-oxobutanoate: step 3/4. It participates in amino-acid biosynthesis; L-valine biosynthesis; L-valine from pyruvate: step 3/4. Functions in the biosynthesis of branched-chain amino acids. Catalyzes the dehydration of (2R,3R)-2,3-dihydroxy-3-methylpentanoate (2,3-dihydroxy-3-methylvalerate) into 2-oxo-3-methylpentanoate (2-oxo-3-methylvalerate) and of (2R)-2,3-dihydroxy-3-methylbutanoate (2,3-dihydroxyisovalerate) into 2-oxo-3-methylbutanoate (2-oxoisovalerate), the penultimate precursor to L-isoleucine and L-valine, respectively. This is Dihydroxy-acid dehydratase from Bacteroides fragilis (strain YCH46).